The primary structure comprises 391 residues: 3-ketoacyl-CoA thiolase (391 aa).

The Acyl-thioester intermediate role is filled by Cys95. Active-site proton acceptor residues include His347 and Cys377.

The protein belongs to the thiolase-like superfamily. Thiolase family. In terms of assembly, heterotetramer of two alpha chains (FadB) and two beta chains (FadA).

It is found in the cytoplasm. The enzyme catalyses an acyl-CoA + acetyl-CoA = a 3-oxoacyl-CoA + CoA. Its pathway is lipid metabolism; fatty acid beta-oxidation. Its function is as follows. Catalyzes the final step of fatty acid oxidation in which acetyl-CoA is released and the CoA ester of a fatty acid two carbons shorter is formed. The protein is 3-ketoacyl-CoA thiolase of Pseudomonas aeruginosa (strain ATCC 15692 / DSM 22644 / CIP 104116 / JCM 14847 / LMG 12228 / 1C / PRS 101 / PAO1).